The primary structure comprises 188 residues: Cytidylate kinase (188 aa).

An ATP-binding site is contributed by 7 to 15; the sequence is GKIGSGKST.

The protein belongs to the cytidylate kinase family. Type 2 subfamily.

The protein resides in the cytoplasm. It catalyses the reaction CMP + ATP = CDP + ADP. It carries out the reaction dCMP + ATP = dCDP + ADP. The sequence is that of Cytidylate kinase (cmk) from Thermoplasma acidophilum (strain ATCC 25905 / DSM 1728 / JCM 9062 / NBRC 15155 / AMRC-C165).